Here is an 82-residue protein sequence, read N- to C-terminus: Small ribosomal subunit protein bS16c (82 aa).

Belongs to the bacterial ribosomal protein bS16 family.

It is found in the plastid. The protein localises to the chloroplast. The chain is Small ribosomal subunit protein bS16c from Porphyra purpurea (Red seaweed).